A 395-amino-acid chain; its full sequence is Mitogen-activated protein kinase 6 (395 aa).

A disordered region spans residues 1–35 (MDGGSGQPAADTEMTEAPGGFPAAAPSPQMPGIEN). The segment covering 17 to 27 (APGGFPAAAPS) has biased composition (low complexity). The Protein kinase domain occupies 63–348 (KPPIMPIGKG…VLDALAHPYL (286 aa)). ATP is bound by residues 69-77 (IGKGAYGIV) and lysine 92. Aspartate 189 (proton acceptor) is an active-site residue. Threonine 221 carries the post-translational modification Phosphothreonine. A TXY motif is present at residues 221–223 (TEY). Tyrosine 223 is subject to Phosphotyrosine. Threonine 226 carries the phosphothreonine modification.

Belongs to the protein kinase superfamily. CMGC Ser/Thr protein kinase family. MAP kinase subfamily. Interacts with MEKK1, MKK1 and MKK2. May form a ternary complex with MEKK1 and MKK1 or MKK2. Interacts with NDPK2, AP2C1, MKP1 and PTP1. Interacts with DSPTP1B/MKP2, especially during HR-like responses triggered by fungal elicitors. Interacts with MKK4, MKK5 and MKK6. Binds to LIP5. Interacts with VQ4 and IKU1/VQ14. Interacts with RACK1A, RACK1B and RACK1C. Interacts with PTP1. Interacts with FLZ9. Binds to BASL and YDA. Post-translationally, dually phosphorylated on Thr-221 and Tyr-223, which activates the enzyme. Dephosphorylated by DSPTP1B/MKP2.

It localises to the cytoplasm. The protein resides in the nucleus. It is found in the cell cortex. The catalysed reaction is L-seryl-[protein] + ATP = O-phospho-L-seryl-[protein] + ADP + H(+). It catalyses the reaction L-threonyl-[protein] + ATP = O-phospho-L-threonyl-[protein] + ADP + H(+). Its activity is regulated as follows. Activated by threonine and tyrosine phosphorylation. Activated by the MAP kinase kinases MKK2, MKK3, MKK4, MKK5, MKK7 and MKK9. Activated in response to touch, wounding, low temperature, low humidity, salt stress, hydrogen peroxide, ozone, ACC (an ethylene precursor), jasmonic acid (JA), mastoparan and UVC. Activated in response to elicitors: oligogalacturonides, hexameric chitin fragments, fungal xylanase, and the bacterial flagellin and harpin. Activated upon Pseudomonas syringae pv. tomato DC3000 infection. Repressed by the protein phosphatase 2C AP2C1 and the protein-tyrosine-phosphatases MKP1 and PTP1. Repressed by DSPTP1B/MKP2-mediated dephosphorylation. Activated by polarized BASL. Triggered by MKKK20 in response to various abiotic stresses, including osmotic stress, cold and reactive oxygen species (ROS). Activated by MKK5 in response to abscisic acid (ABA). Its function is as follows. Mitogen-activated protein kinase (MAPK) which regulates abscisic acid (ABA) responses in a MAPKKK20-MKK5-MPK6 cascade involved in root growth (e.g. root cell division and elongation) and stomatal response. Involved in oxidative stress-mediated signaling cascade (such as ozone). Involved in the innate immune MAP kinase signaling cascade (MEKK1, MKK4/MKK5 and MPK3/MPK6) downstream of bacterial flagellin receptor FLS2. May be involved in hypersensitive response (HR)-mediated signaling cascade by modulating LIP5 phosphorylation and subsequent multivesicular bodies (MVBs) trafficking. May phosphorylate regulators of WRKY transcription factors. Phosphorylates 1-aminocyclopropane-1-carboxylic acid synthases (ACS2 and ACS6) and may be involved in the regulation of bacterial elicitor flagellin-induced ethylene production. Regulates locally gene-mediated and basal resistance response to certain pathogens. May be involved in the cold and salinity stress-mediated MAP kinase signaling cascade (MEKK1, MKK1/MKK2 and MPK4/MPK6). MKK1-MPK6 module mediates abscisic acid (ABA)-dependent CAT1 expression with H(2)O(2) production and response to drought and salt stress. MKK1-MPK6 module is also involved in sugar signaling during the process of seed germination. MKK3-MPK6 module plays an important role in the jasmonate signal transduction pathway through the negative regulation of MYC2/JIN1 expression. MKK9-MPK3/MPK6 module phosphorylates and activates EIN3, leading to the promotion of EIN3-mediated transcription in ethylene signaling. MPK3/MPK6 cascade regulates camalexin synthesis through transcriptional regulation of the biosynthetic genes after pathogen infection. MKK9-MPK6 module positively regulates leaf senescence. YDA-MKK4/MKK5-MPK3/MPK6 module regulates stomatal cell fate before the guard mother cell (GMC) is specified. When activated, reinforces the feedback loop by phosphorylating BASL, and inhibits stomatal fate by phosphorylating SPCH. This MAPK cascade also functions downstream of the ER receptor in regulating coordinated local cell proliferation, which shapes the morphology of plant organs. In Arabidopsis thaliana (Mouse-ear cress), this protein is Mitogen-activated protein kinase 6.